Consider the following 125-residue polypeptide: Large ribosomal subunit protein bL12 (125 aa).

It belongs to the bacterial ribosomal protein bL12 family. In terms of assembly, homodimer. Part of the ribosomal stalk of the 50S ribosomal subunit. Forms a multimeric L10(L12)X complex, where L10 forms an elongated spine to which 2 to 4 L12 dimers bind in a sequential fashion. Binds GTP-bound translation factors.

Forms part of the ribosomal stalk which helps the ribosome interact with GTP-bound translation factors. Is thus essential for accurate translation. The protein is Large ribosomal subunit protein bL12 of Methylorubrum extorquens (strain CM4 / NCIMB 13688) (Methylobacterium extorquens).